A 123-amino-acid chain; its full sequence is UPF0102 protein CLD_2200 (123 aa).

The protein belongs to the UPF0102 family.

The chain is UPF0102 protein CLD_2200 from Clostridium botulinum (strain Okra / Type B1).